Here is a 473-residue protein sequence, read N- to C-terminus: MINYSERIPNNVNLNENKTLQRALEQWQPSFLNWWDDMGPENSSNYDVYLRTAVSVDPKGWADFGYVKMHDYRWGIFLAPQEGEKKITFGEHKGQDVWQEVPGEYRSTLRRIIVTQGDTEPASVEQQRHLGLTAPSLYDLRNLFQVNVEEGRHLWAMVYLLHAHFGRDGREEGEALLERRSGDEDNPRILTAFNEKTPDWLSFFMFTFITDRDGKFQLASLAESAFDPLARTCKFMLTEEAHHLFVGESGIARVIQRTCEVMKELGTDDPAKLRAAGVIDLPTLQKYLNFHYSVTSDLYGAEISSNAATYYTNGLKGRFEEEKIGDDHKLQNSEYEVMDVAGDKILTRHVPALSALNERLRDDWITDVQAGVDRWNRIPAKFGFDFRFTLPHKGFHRKIGMFADVHVSPDGRLISEAEWTHQHKNWLPTESDRLYVHSLMGRCLEPGKFANWIAAPARGINNQPVNFEYVRFN.

This sequence belongs to the benzoyl-CoA oxygenase component B family. Monomer. The subunit composition of the active BoxA/BoxB protein complex is not known. Fe cation is required as a cofactor.

It carries out the reaction benzoyl-CoA + NADPH + O2 + H(+) = 2,3-epoxy-2,3-dihydrobenzoyl-CoA + NADP(+) + H2O. Its function is as follows. The BoxA/BoxB complex catalyzes the aerobic reduction/oxygenation of the aromatic ring of benzoyl-CoA to form 2,3-epoxy-2,3-dihydrobenzoyl-CoA. BoxB acts as the benzoyl-CoA oxygenase, after being reduced by the reductase component BoxA. BoxAB does not act on NADH or benzoate. The sequence is that of Benzoyl-CoA oxygenase component B (boxB) from Aromatoleum evansii (Azoarcus evansii).